The chain runs to 279 residues: Type III pantothenate kinase (279 aa).

6–13 (DIGNTLSK) is an ATP binding site. Residues Tyr-92 and 99–102 (GVDR) contribute to the substrate site. The active-site Proton acceptor is Asp-101. Asp-120 is a K(+) binding site. An ATP-binding site is contributed by Ser-123. Thr-177 serves as a coordination point for substrate.

This sequence belongs to the type III pantothenate kinase family. Homodimer. It depends on NH4(+) as a cofactor. The cofactor is K(+).

It localises to the cytoplasm. The catalysed reaction is (R)-pantothenate + ATP = (R)-4'-phosphopantothenate + ADP + H(+). The protein operates within cofactor biosynthesis; coenzyme A biosynthesis; CoA from (R)-pantothenate: step 1/5. Its function is as follows. Catalyzes the phosphorylation of pantothenate (Pan), the first step in CoA biosynthesis. The chain is Type III pantothenate kinase from Chromohalobacter salexigens (strain ATCC BAA-138 / DSM 3043 / CIP 106854 / NCIMB 13768 / 1H11).